Reading from the N-terminus, the 537-residue chain is Serendipity locus protein alpha (537 aa).

It is found in the cytoplasm. It localises to the cell membrane. Its function is as follows. Required for the cellularization of the syncytial blastoderm embryo. Involved in the localization of the actin filaments just prior to and during plasma membrane invagination. Sry-alpha together with nullo and bnk may provide auxiliary functions, by acting both to stabilize a large and dynamic microfilament structure and regulate its functions. This chain is Serendipity locus protein alpha (Sry-alpha), found in Drosophila virilis (Fruit fly).